The following is a 365-amino-acid chain: Deoxyguanosinetriphosphate triphosphohydrolase-like protein (365 aa).

One can recognise an HD domain in the interval 52–187 (RLTHSIEVSQ…VDHADEIAYV (136 aa)).

Belongs to the dGTPase family. Type 2 subfamily.

This chain is Deoxyguanosinetriphosphate triphosphohydrolase-like protein, found in Wolinella succinogenes (strain ATCC 29543 / DSM 1740 / CCUG 13145 / JCM 31913 / LMG 7466 / NCTC 11488 / FDC 602W) (Vibrio succinogenes).